Reading from the N-terminus, the 83-residue chain is Small ribosomal subunit protein bS16c (83 aa).

The protein belongs to the bacterial ribosomal protein bS16 family.

Its subcellular location is the plastid. The protein resides in the chloroplast. The sequence is that of Small ribosomal subunit protein bS16c from Chaetosphaeridium globosum (Charophycean green alga).